Here is a 267-residue protein sequence, read N- to C-terminus: 1-(5-phosphoribosyl)-5-[(5-phosphoribosylamino)methylideneamino] imidazole-4-carboxamide isomerase (267 aa).

It belongs to the HisA/HisF family.

The protein localises to the cytoplasm. The catalysed reaction is 1-(5-phospho-beta-D-ribosyl)-5-[(5-phospho-beta-D-ribosylamino)methylideneamino]imidazole-4-carboxamide = 5-[(5-phospho-1-deoxy-D-ribulos-1-ylimino)methylamino]-1-(5-phospho-beta-D-ribosyl)imidazole-4-carboxamide. Its pathway is amino-acid biosynthesis; L-histidine biosynthesis; L-histidine from 5-phospho-alpha-D-ribose 1-diphosphate: step 4/9. This chain is 1-(5-phosphoribosyl)-5-[(5-phosphoribosylamino)methylideneamino] imidazole-4-carboxamide isomerase (HIS6), found in Kluyveromyces lactis (strain ATCC 8585 / CBS 2359 / DSM 70799 / NBRC 1267 / NRRL Y-1140 / WM37) (Yeast).